The sequence spans 205 residues: uncharacterized protein (205 aa).

The protein belongs to the IIV-6 170L family.

This is an uncharacterized protein from Invertebrate iridescent virus 3 (IIV-3).